The chain runs to 108 residues: Abdominal ganglion neuropeptide R3-14 (108 aa).

A signal peptide spans 1 to 23; it reads MQVLHLCLAVSIAVALLSQAAWS. Pyrrolidone carboxylic acid (Glu); partial is present on residues Glu24 and Glu52. Gln66 is modified (pyrrolidone carboxylic acid).

The partial formation of pyroglutamate from N-terminal glutamic acid in peptides isolated from single cells is detected by mass spectrometry. There are indications this modification depends on a heat sensitive factor. In terms of tissue distribution, neurons R3-R14. A cluster of 12 giant neurons located on the right side of the abdominal ganglion.

The protein resides in the secreted. HRBP is a myoactive peptide that excites Aplysia heart and enhances gut motility in vitro. The polypeptide is Abdominal ganglion neuropeptide R3-14 (Aplysia californica (California sea hare)).